A 1115-amino-acid polypeptide reads, in one-letter code: DNA-directed RNA polymerase subunit beta (1115 aa).

The segment at 1084-1115 (HEAGEGEDDEYFEEDEEAVDDEPMTFDDDDME) is disordered. Positions 1088 to 1115 (EGEDDEYFEEDEEAVDDEPMTFDDDDME) are enriched in acidic residues.

Belongs to the RNA polymerase beta chain family. In terms of assembly, the RNAP catalytic core consists of 2 alpha, 1 beta, 1 beta' and 1 omega subunit. When a sigma factor is associated with the core the holoenzyme is formed, which can initiate transcription.

It catalyses the reaction RNA(n) + a ribonucleoside 5'-triphosphate = RNA(n+1) + diphosphate. In terms of biological role, DNA-dependent RNA polymerase catalyzes the transcription of DNA into RNA using the four ribonucleoside triphosphates as substrates. This Desulfitobacterium hafniense (strain Y51) protein is DNA-directed RNA polymerase subunit beta.